The following is a 304-amino-acid chain: Acetylglutamate kinase (304 aa).

Residues 82–83 (GG), arginine 104, and asparagine 197 contribute to the substrate site.

This sequence belongs to the acetylglutamate kinase family. ArgB subfamily.

Its subcellular location is the cytoplasm. The catalysed reaction is N-acetyl-L-glutamate + ATP = N-acetyl-L-glutamyl 5-phosphate + ADP. It participates in amino-acid biosynthesis; L-arginine biosynthesis; N(2)-acetyl-L-ornithine from L-glutamate: step 2/4. Its function is as follows. Catalyzes the ATP-dependent phosphorylation of N-acetyl-L-glutamate. The chain is Acetylglutamate kinase from Prochlorococcus marinus (strain NATL1A).